The chain runs to 250 residues: 2,3-bisphosphoglycerate-dependent phosphoglycerate mutase (250 aa).

Substrate contacts are provided by residues 8-15 (RHGESKWN), 21-22 (TG), Arg60, 87-90 (ERHY), Lys98, 114-115 (RR), and 183-184 (GN). Residue His9 is the Tele-phosphohistidine intermediate of the active site. Glu87 acts as the Proton donor/acceptor in catalysis.

The protein belongs to the phosphoglycerate mutase family. BPG-dependent PGAM subfamily.

It catalyses the reaction (2R)-2-phosphoglycerate = (2R)-3-phosphoglycerate. Its pathway is carbohydrate degradation; glycolysis; pyruvate from D-glyceraldehyde 3-phosphate: step 3/5. Its function is as follows. Catalyzes the interconversion of 2-phosphoglycerate and 3-phosphoglycerate. This Borrelia recurrentis (strain A1) protein is 2,3-bisphosphoglycerate-dependent phosphoglycerate mutase.